The primary structure comprises 513 residues: Mesoderm induction early response protein 1 (513 aa).

A compositionally biased stretch (low complexity) spans 1 to 16 (MAEPSVESSSPGGSAT). Residues 1 to 174 (MAEPSVESSS…EEESEEDEDY (174 aa)) form a disordered region. Basic and acidic residues-rich tracts occupy residues 17–36 (SDDHEFDPSADMLVHDFDDE) and 46–63 (EGERNFNSEIEDLNRESD). Over residues 82–107 (QEDDDDEDEEEEEEEGEDDDDVDNDD) the composition is skewed to acidic residues. Positions 131–146 (QSSNDDPAPSVASQDP) are enriched in polar residues. Residues 157–261 (YFDTNSEIEE…IKDNEQALYE (105 aa)) are interaction with HDAC1. Positions 162–174 (SEIEEESEEDEDY) are enriched in acidic residues. In terms of domain architecture, ELM2 spans 182–280 (KEIMVGSMFQ…ESLRRLRFNV (99 aa)). In terms of domain architecture, SANT spans 285-337 (EELSVWTEEECRNFEQGLKVYGKDFHVIQANKVRTRSVGECVAFYYMWKKSER). Residues 368 to 513 (ESESAASSRA…KLEELETLDD (146 aa)) are disordered. Composition is skewed to basic and acidic residues over residues 416-425 (PSKDEAKPEG) and 463-476 (SRSENDFEEKNERP). Polar residues predominate over residues 483 to 500 (NSNGKESPGSSEFFQEAN).

It localises to the nucleus. Its function is as follows. Transcriptional repressor regulating the expression of a number of genes. Probably functions through recruitment of histone deacetylases involved in chromatin silencing. In Gallus gallus (Chicken), this protein is Mesoderm induction early response protein 1 (MIER1).